We begin with the raw amino-acid sequence, 201 residues long: Potassium-transporting ATPase KdpC subunit (201 aa).

Residues 13-33 form a helical membrane-spanning segment; sequence IIFIIFTILCGGIYTIFITGI.

The protein belongs to the KdpC family. The system is composed of three essential subunits: KdpA, KdpB and KdpC.

The protein resides in the cell membrane. In terms of biological role, part of the high-affinity ATP-driven potassium transport (or Kdp) system, which catalyzes the hydrolysis of ATP coupled with the electrogenic transport of potassium into the cytoplasm. This subunit acts as a catalytic chaperone that increases the ATP-binding affinity of the ATP-hydrolyzing subunit KdpB by the formation of a transient KdpB/KdpC/ATP ternary complex. This Clostridium botulinum (strain Alaska E43 / Type E3) protein is Potassium-transporting ATPase KdpC subunit.